We begin with the raw amino-acid sequence, 801 residues long: Phenylalanine--tRNA ligase beta subunit (801 aa).

The tRNA-binding domain occupies 39 to 147; that stretch reads GGGLDQVVVA…SDLPLGVPLF (109 aa). A B5 domain is found at 401–477; the sequence is VSHRTIRFRV…RLNGYDRIET (77 aa). Mg(2+) contacts are provided by aspartate 455, aspartate 461, glutamate 464, and glutamate 465. One can recognise an FDX-ACB domain in the interval 708–801; it reads SRFPDTFRDI…LVAKLGATIR (94 aa).

It belongs to the phenylalanyl-tRNA synthetase beta subunit family. Type 1 subfamily. Tetramer of two alpha and two beta subunits. Mg(2+) serves as cofactor.

The protein localises to the cytoplasm. It catalyses the reaction tRNA(Phe) + L-phenylalanine + ATP = L-phenylalanyl-tRNA(Phe) + AMP + diphosphate + H(+). This is Phenylalanine--tRNA ligase beta subunit from Geobacter sulfurreducens (strain ATCC 51573 / DSM 12127 / PCA).